A 151-amino-acid polypeptide reads, in one-letter code: UPF0756 membrane protein LBA0919 (151 aa).

The next 4 helical transmembrane spans lie at 4–24 (WLFLALILVVALLGKNMSLII), 52–72 (WGVTIISVAILIPIATGQIGF), 78–98 (TFKTPAGWIAILAGIAVAVLS), and 115–135 (LVLGTIIGVVAFKGVAAGPVI).

The protein belongs to the UPF0756 family.

It localises to the cell membrane. This is UPF0756 membrane protein LBA0919 from Lactobacillus acidophilus (strain ATCC 700396 / NCK56 / N2 / NCFM).